Reading from the N-terminus, the 571-residue chain is Gag-Pro polyprotein (571 aa).

Residue G2 is the site of N-myristoyl glycine; by host attachment. The PPXY motif motif lies at 100–103 (PPPY). 2 repeats span residues 342–362 (PPPG…DCPT) and 367–387 (PPPG…DCPT). CCHC-type zinc fingers lie at residues 345–362 (GPCY…DCPT) and 370–387 (GPCP…DCPT). The region spanning 447–525 (ALMLVDTGAE…DKWQILGRDV (79 aa)) is the Peptidase A2 domain. D452 acts as the Protease; shared with dimeric partner in catalysis.

In terms of assembly, homodimer; the homodimers are part of the immature particles. Interacts with human TSG101 and NEDD4; these interactions are essential for budding and release of viral particles. Homodimer; further assembles as homohexamers. Post-translationally, specific enzymatic cleavages by the viral protease yield mature proteins. The polyprotein is cleaved during and after budding, this process is termed maturation. The protease is autoproteolytically processed at its N- and C-termini. In terms of processing, gag polyprotein: Myristoylated. Myristoylation of the matrix (MA) domain mediates the transport and binding of Gag polyproteins to the host plasma membrane and is required for the assembly of viral particles.

It is found in the virion. The matrix domain targets Gag, Gag-Pro and Gag-Pro-Pol polyproteins to the plasma membrane via a multipartite membrane binding signal, that includes its myristoylated N-terminus. Its function is as follows. Matrix protein. In terms of biological role, forms the spherical core of the virus that encapsulates the genomic RNA-nucleocapsid complex. Functionally, binds strongly to viral nucleic acids and promote their aggregation. Also destabilizes the nucleic acids duplexes via highly structured zinc-binding motifs. The aspartyl protease mediates proteolytic cleavages of Gag and Gag-Pol polyproteins during or shortly after the release of the virion from the plasma membrane. Cleavages take place as an ordered, step-wise cascade to yield mature proteins. This process is called maturation. Displays maximal activity during the budding process just prior to particle release from the cell. This chain is Gag-Pro polyprotein, found in Bos taurus (Bovine).